The primary structure comprises 328 residues: Putative UDP-N-acetylglucosamine--dolichyl-phosphate N-acetylglucosaminephosphotransferase (328 aa).

9 helical membrane-spanning segments follow: residues 1-21 (MLVS…VTLI), 48-68 (VPVL…FTFL), 78-98 (IENV…LGLL), 107-127 (ATRA…SVGH), 129-149 (IISI…IIIL), 166-186 (LNGL…YIGL), 192-212 (SFYA…FLIF), 228-248 (FIGS…ALFF), and 301-321 (YHIV…AVVF).

This sequence belongs to the glycosyltransferase 4 family.

It localises to the cell membrane. It catalyses the reaction a di-trans,poly-cis-dolichyl phosphate + UDP-N-acetyl-alpha-D-glucosamine = an N-acetyl-alpha-D-glucosaminyl-diphospho-di-trans,poly-cis-dolichol + UMP. With respect to regulation, inhibited by tunicamycin. The chain is Putative UDP-N-acetylglucosamine--dolichyl-phosphate N-acetylglucosaminephosphotransferase (gnpTA) from Sulfolobus acidocaldarius (strain ATCC 33909 / DSM 639 / JCM 8929 / NBRC 15157 / NCIMB 11770).